The primary structure comprises 64 residues: DNA-binding protein 7d (64 aa).

5 positions are modified to N6-methyllysine: K5, K7, K61, K63, and K64.

This sequence belongs to the 7 kDa DNA-binding/endoribonuclease P2 family. As to quaternary structure, monomer.

Its subcellular location is the cytoplasm. Can constrain negative DNA supercoils. May be involved in maintaining the integrity of the genome at high temperature. Stimulates the Holliday junction cleavage activity of Hjc. This Saccharolobus solfataricus (strain ATCC 35092 / DSM 1617 / JCM 11322 / P2) (Sulfolobus solfataricus) protein is DNA-binding protein 7d (sso7d).